The sequence spans 229 residues: 7-cyano-7-deazaguanine synthase (229 aa).

9–19 is an ATP binding site; the sequence is LSGGLDSTTVL. Positions 192, 202, 205, and 208 each coordinate Zn(2+).

Belongs to the QueC family. It depends on Zn(2+) as a cofactor.

The catalysed reaction is 7-carboxy-7-deazaguanine + NH4(+) + ATP = 7-cyano-7-deazaguanine + ADP + phosphate + H2O + H(+). It participates in purine metabolism; 7-cyano-7-deazaguanine biosynthesis. In terms of biological role, catalyzes the ATP-dependent conversion of 7-carboxy-7-deazaguanine (CDG) to 7-cyano-7-deazaguanine (preQ(0)). This Kineococcus radiotolerans (strain ATCC BAA-149 / DSM 14245 / SRS30216) protein is 7-cyano-7-deazaguanine synthase.